Consider the following 442-residue polypeptide: Cyclin-A1-2 (442 aa).

Composition is skewed to polar residues over residues 1-12 (MSSSSRNLSQEN) and 39-63 (ITNQKNGSRNPSPSSTLVNCSNKIG). The tract at residues 1–72 (MSSSSRNLSQ…GQSKKAPKPA (72 aa)) is disordered.

The protein belongs to the cyclin family. Cyclin AB subfamily. As to quaternary structure, interacts with CDC20-1, CDC20-2, FZR2/CCS52A1 and FZR1/CCS52A2. Expressed in roots, stems and flowers.

It localises to the cytoplasm. The protein resides in the nucleus. In terms of biological role, involved in the regulation of male meiosis progression. This is Cyclin-A1-2 (CYCA1-2) from Arabidopsis thaliana (Mouse-ear cress).